Consider the following 211-residue polypeptide: Small ribosomal subunit protein uS5 (211 aa).

The 64-residue stretch at 50–113 folds into the S5 DRBM domain; that stretch reads LEDEVLDINM…DNAKINITRI (64 aa).

The protein belongs to the universal ribosomal protein uS5 family. As to quaternary structure, part of the 30S ribosomal subunit. Contacts protein S4.

Its function is as follows. With S4 and S12 plays an important role in translational accuracy. The sequence is that of Small ribosomal subunit protein uS5 from Methanococcoides burtonii (strain DSM 6242 / NBRC 107633 / OCM 468 / ACE-M).